The following is a 331-amino-acid chain: Olfactory receptor 7E178 (331 aa).

The Extracellular portion of the chain corresponds to 1 to 47; that stretch reads MMDRYSFIMHQHRDDTVWCPSKIEEQNITRISEFHLMGLSDDLQLQP. The N-linked (GlcNAc...) asparagine glycan is linked to asparagine 27. A helical transmembrane segment spans residues 48-68; it reads ILFGLFLSMYLVTLLGNLLII. The Cytoplasmic portion of the chain corresponds to 69–80; the sequence is LTVSSDSHLHSP. A helical membrane pass occupies residues 81 to 100; it reads MYFFLSNLSLADVSFTSTTL. The Extracellular portion of the chain corresponds to 101-119; it reads PKMIVDIQTHNRAISYSGC. Cysteine 119 and cysteine 201 are disulfide-bonded. Residues 120–140 form a helical membrane-spanning segment; it reads LTQMSFFMLFGCLDSLLLTAM. Residues 141–164 lie on the Cytoplasmic side of the membrane; the sequence is AYDRFVAICHPLHYQFIMNPRLCG. A helical membrane pass occupies residues 165–185; it reads LLVFLSVLISLFVSQLHNSVV. At 186 to 218 the chain is on the extracellular side; it reads LQLTYFKSVDISHFFCDPSQLLNLACSDTFTNN. Residues 219–239 traverse the membrane as a helical segment; it reads IVMYFVGAISGFLPISGIFFS. At 240-266 the chain is on the cytoplasmic side; sequence YYKIVSSILRMPSPGGKYKAFSTCGSH. The chain crosses the membrane as a helical span at residues 267-287; sequence LSVVCLFYGTGLGVYLSSAVS. The Extracellular portion of the chain corresponds to 288–293; sequence LSPRKG. The helical transmembrane segment at 294 to 314 threads the bilayer; sequence AVASIVYTVVTPMLNPFIYSL. Over 315–331 the chain is Cytoplasmic; it reads RNQDIKRAMWRLLRKTV.

It belongs to the G-protein coupled receptor 1 family.

It is found in the cell membrane. Odorant receptor. The protein is Olfactory receptor 7E178 of Mus musculus (Mouse).